We begin with the raw amino-acid sequence, 448 residues long: Probable D-serine dehydratase (448 aa).

The residue at position 119 (Lys119) is an N6-(pyridoxal phosphate)lysine.

This sequence belongs to the serine/threonine dehydratase family. DsdA subfamily. The cofactor is pyridoxal 5'-phosphate.

The enzyme catalyses D-serine = pyruvate + NH4(+). The chain is Probable D-serine dehydratase from Chromobacterium violaceum (strain ATCC 12472 / DSM 30191 / JCM 1249 / CCUG 213 / NBRC 12614 / NCIMB 9131 / NCTC 9757 / MK).